The following is a 293-amino-acid chain: Large ribosomal subunit protein uL2c (293 aa).

The tract at residues 224–245 is disordered; the sequence is VMNPVDHPHGGGEGKSPIGRAR.

It belongs to the universal ribosomal protein uL2 family. Part of the 50S ribosomal subunit.

The protein resides in the plastid. It is found in the chloroplast. The chain is Large ribosomal subunit protein uL2c (rpl2) from Pyropia yezoensis (Susabi-nori).